A 121-amino-acid chain; its full sequence is EAQLQQSGAELVRPGTSVKISCKAAGYTFTNYWIGWVKERPGHGLEWIGDIYPGGGFTNYNDNLKGKATLTADTSSSTAYIQLSSLTSEDSAIYHCARGIYYNSSPYFDSWGQGTTLTVSS.

In terms of domain architecture, Ig-like spans 1–112 (EAQLQQSGAE…NSSPYFDSWG (112 aa)).

The chain is Ig heavy chain V region MPC 11 from Mus musculus (Mouse).